A 206-amino-acid chain; its full sequence is Probable thymidylate kinase (206 aa).

Position 10-17 (10-17 (GIDGSGKS)) interacts with ATP.

Belongs to the thymidylate kinase family.

It catalyses the reaction dTMP + ATP = dTDP + ADP. This is Probable thymidylate kinase from Methanosarcina mazei (strain ATCC BAA-159 / DSM 3647 / Goe1 / Go1 / JCM 11833 / OCM 88) (Methanosarcina frisia).